The sequence spans 201 residues: Adenylyl-sulfate kinase (201 aa).

35–42 contacts ATP; that stretch reads GLSGSGKS. S109 acts as the Phosphoserine intermediate in catalysis.

This sequence belongs to the APS kinase family.

The catalysed reaction is adenosine 5'-phosphosulfate + ATP = 3'-phosphoadenylyl sulfate + ADP + H(+). The protein operates within sulfur metabolism; hydrogen sulfide biosynthesis; sulfite from sulfate: step 2/3. In terms of biological role, catalyzes the synthesis of activated sulfate. The polypeptide is Adenylyl-sulfate kinase (Prochlorococcus marinus (strain SARG / CCMP1375 / SS120)).